A 257-amino-acid polypeptide reads, in one-letter code: Ribosomal RNA small subunit methyltransferase J (257 aa).

Residues 109 to 110 (RD), 125 to 126 (ER), and aspartate 179 contribute to the S-adenosyl-L-methionine site.

It belongs to the methyltransferase superfamily. RsmJ family.

It is found in the cytoplasm. The catalysed reaction is guanosine(1516) in 16S rRNA + S-adenosyl-L-methionine = N(2)-methylguanosine(1516) in 16S rRNA + S-adenosyl-L-homocysteine + H(+). Specifically methylates the guanosine in position 1516 of 16S rRNA. This chain is Ribosomal RNA small subunit methyltransferase J, found in Actinobacillus succinogenes (strain ATCC 55618 / DSM 22257 / CCUG 43843 / 130Z).